Here is a 483-residue protein sequence, read N- to C-terminus: Regulatory protein ViaA (483 aa).

This sequence belongs to the ViaA family. In terms of assembly, homodimer. Interacts with RavA.

It is found in the cytoplasm. Component of the RavA-ViaA chaperone complex, which may act on the membrane to optimize the function of some of the respiratory chains. ViaA stimulates the ATPase activity of RavA. In Escherichia coli O9:H4 (strain HS), this protein is Regulatory protein ViaA.